Reading from the N-terminus, the 300-residue chain is Cation-efflux pump FieF (300 aa).

4 consecutive transmembrane segments (helical) span residues 12–32 (AAIAATAMASLLLLIKIFAWW), 39–59 (ILAALVDSLVDIGASLTNLLV), 82–102 (AALAQSMFISGSALFLFLTGI), and 114–134 (PGVGVIVTIVALICTIILVSF). Zn(2+) is bound by residues D45 and D49. Residues H153 and D157 each coordinate Zn(2+). The next 2 membrane-spanning stretches (helical) occupy residues 156–176 (SDVMMNGAILLALGLSWYGWH) and 178–198 (ADALFALGIGIYILYSALRMG).

This sequence belongs to the cation diffusion facilitator (CDF) transporter (TC 2.A.4) family. FieF subfamily. Homodimer.

The protein localises to the cell inner membrane. It carries out the reaction Zn(2+)(in) + H(+)(out) = Zn(2+)(out) + H(+)(in). The catalysed reaction is Cd(2+)(in) + H(+)(out) = Cd(2+)(out) + H(+)(in). It catalyses the reaction Fe(2+)(in) + H(+)(out) = Fe(2+)(out) + H(+)(in). Its function is as follows. Divalent metal cation transporter which exports Zn(2+), Cd(2+) and possibly Fe(2+). May be involved in zinc and iron detoxification by efflux. The protein is Cation-efflux pump FieF of Shigella boydii serotype 18 (strain CDC 3083-94 / BS512).